Reading from the N-terminus, the 604-residue chain is Netrin-1 (604 aa).

Positions 1–24 (MMRAVWEALAALAAVACLVGAVRG) are cleaved as a signal peptide. The Laminin N-terminal domain maps to 47–284 (HPRRCIPDFV…AVSDLQVGGR (238 aa)). N-linked (GlcNAc...) asparagine glycans are attached at residues N95, N116, and N131. Cystine bridges form between C119/C152, C285/C294, C287/C304, C306/C315, C318/C338, C341/C350, C343/C368, C371/C380, C383/C401, C404/C416, C406/C423, C425/C434, C437/C451, C472/C544, and C491/C601. Laminin EGF-like domains are found at residues 285 to 340 (CKCN…ECVA), 341 to 403 (CNCN…ACKA), and 404 to 453 (CDCH…PCIK). Residue N417 is glycosylated (N-linked (GlcNAc...) asparagine). The 130-residue stretch at 472–601 (CDSYCKASKG…FQQREKKGKC (130 aa)) folds into the NTR domain. The Cell attachment site signature appears at 530–532 (RGD).

As to quaternary structure, binds to its receptors; DCC, UNC5A, UNC5B, UNC5C and probably UNC5D. Binds to its receptor; DSCAM. Interacts with APP. In the embryo, widely expressed in the developing nervous system and in mesodermal tissues.

The protein localises to the secreted. It localises to the cytoplasm. Its function is as follows. Netrins control guidance of CNS commissural axons and peripheral motor axons. Its association with either DCC or some UNC5 receptors will lead to axon attraction or repulsion, respectively. Binding to UNC5C might cause dissociation of UNC5C from polymerized TUBB3 in microtubules and thereby lead to increased microtubule dynamics and axon repulsion. Involved in dorsal root ganglion axon projection towards the spinal cord. It also serves as a survival factor via its association with its receptors which prevent the initiation of apoptosis. Involved in colorectal tumorigenesis by regulating apoptosis. The polypeptide is Netrin-1 (Ntn1) (Mus musculus (Mouse)).